Consider the following 854-residue polypeptide: Nucleolar MIF4G domain-containing protein 1 homolog (854 aa).

Disordered regions lie at residues 1–38 (MAKI…FAGK), 55–105 (QSQL…DAEV), 120–161 (PLGK…KQRI), and 217–306 (RKWE…RDAE). Over residues 15–28 (TRKEQRKQKSEFKK) the composition is skewed to basic and acidic residues. Positions 60-71 (KNKKKKRSKKPK) are enriched in basic residues. The segment covering 88–105 (IDSDDDESIDSDFSDAEV) has biased composition (acidic residues). Composition is skewed to basic and acidic residues over residues 135–156 (RQDE…ESKS) and 217–238 (RKWE…KEEA). The span at 242 to 289 (SDEEEDKEDRDEPMDNFSEDDSGSEGEDDDEDLTGEEEQSEEDSEQEE) shows a compositional bias: acidic residues. Basic and acidic residues predominate over residues 290–306 (NAPKIKEDIYGRKRDAE). Positions 352–553 (LKQCKGLLNR…DILNAVKNNN (202 aa)) constitute an MIF4G domain. Residues 650 to 764 (AERRNIFCII…QLSVLKVVDF (115 aa)) enclose the MI domain.

The protein belongs to the CWC22 family.

It localises to the nucleus. The protein resides in the nucleolus. The polypeptide is Nucleolar MIF4G domain-containing protein 1 homolog (Drosophila melanogaster (Fruit fly)).